The following is a 414-amino-acid chain: Cell division protein FtsA (414 aa).

This sequence belongs to the FtsA/MreB family. In terms of assembly, self-interacts. Interacts with FtsZ.

It is found in the cell inner membrane. Functionally, cell division protein that is involved in the assembly of the Z ring. May serve as a membrane anchor for the Z ring. The polypeptide is Cell division protein FtsA (Neisseria meningitidis serogroup B (strain ATCC BAA-335 / MC58)).